The following is a 252-amino-acid chain: MFKVVICDDERIIREGLKQIIPWGDYHFNTIYTAKDGVEALSLIQQHQPELVITDIRMPRKNGVDLLNDIAHLDCNVIILSSYDDFEYMKAGIQHHVLDYLLKPVDHAQLEVILGRLVRTLLEQQSQNGRSLAPCHDAFQPLLKVEYDDYYVNQIVDQIKQSYQTKVTVSDLIQHIDVSESYAMRTFKDHVGITIVDYLNRYRILQSLQLLDRHYKHYEIADKVGFSEYKMFSYHFKKYLQMSPSDYCKQAK.

Positions 3–118 (KVVICDDERI…QLEVILGRLV (116 aa)) constitute a Response regulatory domain. Aspartate 55 is modified (4-aspartylphosphate). The region spanning 153 to 250 (NQIVDQIKQS…QMSPSDYCKQ (98 aa)) is the HTH araC/xylS-type domain. DNA-binding regions (H-T-H motif) lie at residues 170–191 (SDLI…KDHV) and 217–240 (HYEI…KKYL).

Post-translationally, phosphorylated by HptS.

It is found in the cytoplasm. Functionally, member of the two-component regulatory system HptS/HptR that regulates genes involved in hexose phosphate transport system in response to changes in extracellular phosphate sources. Activates uhpT expression to facilitate glucose-6-phosphate/G6P utilization by directly binding to its promoter. Antagonizes CcpA-dependent transcription of a subset of CcpA-regulated genes involved in antibiotic susceptibility. The sequence is that of Transcriptional regulatory protein HptR (hptR) from Staphylococcus aureus (strain MRSA252).